Here is a 1076-residue protein sequence, read N- to C-terminus: Carbamoyl phosphate synthase large chain (1076 aa).

Positions 1 to 403 are carboxyphosphate synthetic domain; it reads MPKRTDIQSI…SLQKALRGLE (403 aa). ATP contacts are provided by arginine 129, arginine 169, glycine 175, glycine 176, glutamate 208, leucine 210, glutamate 215, glycine 241, valine 242, histidine 243, glutamine 285, and glutamate 299. In terms of domain architecture, ATP-grasp 1 spans 133–328; it reads DQAMKRIGLE…IAKIAAKLAV (196 aa). 3 residues coordinate Mg(2+): glutamine 285, glutamate 299, and asparagine 301. Residues glutamine 285, glutamate 299, and asparagine 301 each contribute to the Mn(2+) site. An oligomerization domain region spans residues 404–553; the sequence is TGNDGLDPKV…YSSYEEECEA (150 aa). A carbamoyl phosphate synthetic domain region spans residues 554-935; the sequence is EVSDRPKIMV…AFYKAQLGAG (382 aa). Positions 678–869 constitute an ATP-grasp 2 domain; that stretch reads QHMVDKLGLK…LAQVAARCMA (192 aa). ATP-binding residues include arginine 714, histidine 753, leucine 755, glutamate 760, glycine 785, valine 786, histidine 787, serine 788, glutamine 828, and glutamate 840. Mg(2+)-binding residues include glutamine 828, glutamate 840, and asparagine 842. Mn(2+)-binding residues include glutamine 828, glutamate 840, and asparagine 842. In terms of domain architecture, MGS-like spans 936–1076; that stretch reads EAIPALEGER…LQELHAGVSQ (141 aa). The interval 936–1076 is allosteric domain; it reads EAIPALEGER…LQELHAGVSQ (141 aa).

This sequence belongs to the CarB family. In terms of assembly, composed of two chains; the small (or glutamine) chain promotes the hydrolysis of glutamine to ammonia, which is used by the large (or ammonia) chain to synthesize carbamoyl phosphate. Tetramer of heterodimers (alpha,beta)4. Mg(2+) serves as cofactor. Mn(2+) is required as a cofactor.

The enzyme catalyses hydrogencarbonate + L-glutamine + 2 ATP + H2O = carbamoyl phosphate + L-glutamate + 2 ADP + phosphate + 2 H(+). The catalysed reaction is hydrogencarbonate + NH4(+) + 2 ATP = carbamoyl phosphate + 2 ADP + phosphate + 2 H(+). It functions in the pathway amino-acid biosynthesis; L-arginine biosynthesis; carbamoyl phosphate from bicarbonate: step 1/1. Its pathway is pyrimidine metabolism; UMP biosynthesis via de novo pathway; (S)-dihydroorotate from bicarbonate: step 1/3. Functionally, large subunit of the glutamine-dependent carbamoyl phosphate synthetase (CPSase). CPSase catalyzes the formation of carbamoyl phosphate from the ammonia moiety of glutamine, carbonate, and phosphate donated by ATP, constituting the first step of 2 biosynthetic pathways, one leading to arginine and/or urea and the other to pyrimidine nucleotides. The large subunit (synthetase) binds the substrates ammonia (free or transferred from glutamine from the small subunit), hydrogencarbonate and ATP and carries out an ATP-coupled ligase reaction, activating hydrogencarbonate by forming carboxy phosphate which reacts with ammonia to form carbamoyl phosphate. The sequence is that of Carbamoyl phosphate synthase large chain from Halomonas eurihalina.